The chain runs to 422 residues: Retinoic acid receptor RXR-beta-B (422 aa).

Residues 1–89 (MNSLPPSTSA…SGPMLSQKRM (89 aa)) form a modulating region. NR C4-type zinc fingers lie at residues 90-110 (CAIC…CEGC) and 126-150 (CRDN…YQKC). The segment at residues 90 to 155 (CAICGDRSSG…RYQKCLAMGM (66 aa)) is a DNA-binding region (nuclear receptor). Residues 156-178 (KREAVQEERQKNKERDGDYECSS) form a hinge region. Over residues 161–173 (QEERQKNKERDGD) the composition is skewed to basic and acidic residues. The interval 161 to 182 (QEERQKNKERDGDYECSSSANE) is disordered. The 241-residue stretch at 181-421 (NEEMPVEKIL…TFLMEMLESP (241 aa)) folds into the NR LBD domain.

The protein belongs to the nuclear hormone receptor family. NR2 subfamily. In terms of assembly, homodimer. Heterodimer; with a rar molecule. Binds DNA preferentially as a rar/rxr heterodimer. Heterodimerizes with rarga. In terms of tissue distribution, shows uniform expression from the blastula to mid-gastrula stages. At 12 hours post-fertilization (hpf), expressed ubiquitously but more weakly. At 24 hpf, restricted to the ventral diencephalon, pharangeal endoderm and trunk and tail mesoderm; mesoderm expression is in medial cells of each somite along the dorsoventral axis, forming stripes. At 48 hpf, expressed in forebrain, eye, midbrain and anterior hindbrain.

Its subcellular location is the nucleus. Its function is as follows. Receptor for retinoic acid. Retinoic acid receptors bind as heterodimers to their target response elements in response to their ligands, all-trans or 9-cis retinoic acid, and regulate gene expression in various biological processes. The rar/rxr heterodimers bind to the retinoic acid response elements (RARE) composed of tandem 5'-AGGTCA-3' sites known as DR1-DR5. The high affinity ligand for rxrs is 9-cis retinoic acid. In Danio rerio (Zebrafish), this protein is Retinoic acid receptor RXR-beta-B (rxrbb).